We begin with the raw amino-acid sequence, 458 residues long: Bifunctional protein GlmU (458 aa).

The segment at methionine 1 to arginine 229 is pyrophosphorylase. Residues leucine 8–glycine 11, lysine 22, glutamine 72, and glycine 77–threonine 78 each bind UDP-N-acetyl-alpha-D-glucosamine. Residue aspartate 102 coordinates Mg(2+). Glycine 139, glutamate 154, asparagine 169, and asparagine 227 together coordinate UDP-N-acetyl-alpha-D-glucosamine. Residue asparagine 227 participates in Mg(2+) binding. Positions valine 230 to asparagine 250 are linker. Positions glycine 251–lysine 458 are N-acetyltransferase. Residues arginine 332 and lysine 350 each contribute to the UDP-N-acetyl-alpha-D-glucosamine site. The active-site Proton acceptor is histidine 362. UDP-N-acetyl-alpha-D-glucosamine-binding residues include tyrosine 365 and asparagine 376. Acetyl-CoA is bound by residues alanine 379, asparagine 385–tyrosine 386, serine 404, alanine 422, and arginine 439.

The protein in the N-terminal section; belongs to the N-acetylglucosamine-1-phosphate uridyltransferase family. In the C-terminal section; belongs to the transferase hexapeptide repeat family. Homotrimer. It depends on Mg(2+) as a cofactor.

The protein localises to the cytoplasm. The catalysed reaction is alpha-D-glucosamine 1-phosphate + acetyl-CoA = N-acetyl-alpha-D-glucosamine 1-phosphate + CoA + H(+). It catalyses the reaction N-acetyl-alpha-D-glucosamine 1-phosphate + UTP + H(+) = UDP-N-acetyl-alpha-D-glucosamine + diphosphate. It participates in nucleotide-sugar biosynthesis; UDP-N-acetyl-alpha-D-glucosamine biosynthesis; N-acetyl-alpha-D-glucosamine 1-phosphate from alpha-D-glucosamine 6-phosphate (route II): step 2/2. The protein operates within nucleotide-sugar biosynthesis; UDP-N-acetyl-alpha-D-glucosamine biosynthesis; UDP-N-acetyl-alpha-D-glucosamine from N-acetyl-alpha-D-glucosamine 1-phosphate: step 1/1. Its pathway is bacterial outer membrane biogenesis; LPS lipid A biosynthesis. Catalyzes the last two sequential reactions in the de novo biosynthetic pathway for UDP-N-acetylglucosamine (UDP-GlcNAc). The C-terminal domain catalyzes the transfer of acetyl group from acetyl coenzyme A to glucosamine-1-phosphate (GlcN-1-P) to produce N-acetylglucosamine-1-phosphate (GlcNAc-1-P), which is converted into UDP-GlcNAc by the transfer of uridine 5-monophosphate (from uridine 5-triphosphate), a reaction catalyzed by the N-terminal domain. The chain is Bifunctional protein GlmU from Streptococcus uberis (strain ATCC BAA-854 / 0140J).